A 115-amino-acid polypeptide reads, in one-letter code: NADH-ubiquinone oxidoreductase chain 3 (115 aa).

The next 3 helical transmembrane spans lie at 4–24, 55–75, and 84–104; these read LMVL…AFWL, FFLV…LLPL, and INIM…GLAY.

Belongs to the complex I subunit 3 family. Core subunit of respiratory chain NADH dehydrogenase (Complex I) which is composed of 45 different subunits. Interacts with TMEM186. Interacts with TMEM242.

The protein resides in the mitochondrion membrane. The enzyme catalyses a ubiquinone + NADH + 5 H(+)(in) = a ubiquinol + NAD(+) + 4 H(+)(out). Its function is as follows. Core subunit of the mitochondrial membrane respiratory chain NADH dehydrogenase (Complex I) that is believed to belong to the minimal assembly required for catalysis. Complex I functions in the transfer of electrons from NADH to the respiratory chain. The immediate electron acceptor for the enzyme is believed to be ubiquinone. This Onychomys leucogaster (Northern grasshopper mouse) protein is NADH-ubiquinone oxidoreductase chain 3.